The sequence spans 299 residues: MAKSLSITPVSGLSRLPWRAYLEMTKPKVVTLMLLTVLVGMCLALPGAVPLQPLIAGMLGIAMMAGAAAAMNHLIDRRIDGLMARTYNRPLPKGKVPVSHAATFAALLALLGFACLYWLVNPLTAWLTLASLLGYAVVYTAYLKRATPQNIVIGGLAGAMPPLLGWTAVTNDFHGHGLLLVIIIFAWTPPHFWALAIHRKADYAKVDIPMLPVTHGVAFTKTCIFLYTILLALACLLPVLVGMSGALYLLGSTLLSIGFIYKAWQLKYHETPGMAMDVFRFSIYHLMLLFILLLVDHYI.

The next 9 helical transmembrane spans lie at valine 29–valine 49, leucine 51–methionine 71, histidine 100–valine 120, leucine 123–leucine 143, asparagine 150–threonine 170, glycine 177–isoleucine 197, cysteine 223–methionine 243, serine 244–tryptophan 264, and alanine 275–valine 295.

This sequence belongs to the UbiA prenyltransferase family. Protoheme IX farnesyltransferase subfamily.

Its subcellular location is the cell inner membrane. The enzyme catalyses heme b + (2E,6E)-farnesyl diphosphate + H2O = Fe(II)-heme o + diphosphate. It functions in the pathway porphyrin-containing compound metabolism; heme O biosynthesis; heme O from protoheme: step 1/1. Converts heme B (protoheme IX) to heme O by substitution of the vinyl group on carbon 2 of heme B porphyrin ring with a hydroxyethyl farnesyl side group. The polypeptide is Protoheme IX farnesyltransferase (Shewanella amazonensis (strain ATCC BAA-1098 / SB2B)).